The following is a 525-amino-acid chain: GMP synthase [glutamine-hydrolyzing] (525 aa).

The region spanning 9–207 is the Glutamine amidotransferase type-1 domain; it reads RILILDFGSQ…VQDICGCEAL (199 aa). C86 functions as the Nucleophile in the catalytic mechanism. Catalysis depends on residues H181 and E183. Residues 208–400 form the GMPS ATP-PPase domain; it reads WTASNIVEDA…LGLPYDMVYR (193 aa). Residue 235–241 coordinates ATP; it reads SGGVDSS.

Homodimer.

It catalyses the reaction XMP + L-glutamine + ATP + H2O = GMP + L-glutamate + AMP + diphosphate + 2 H(+). It participates in purine metabolism; GMP biosynthesis; GMP from XMP (L-Gln route): step 1/1. In terms of biological role, catalyzes the synthesis of GMP from XMP. This is GMP synthase [glutamine-hydrolyzing] from Pseudomonas entomophila (strain L48).